Here is a 419-residue protein sequence, read N- to C-terminus: MDKFRVQGPTRLQGEVTISGAKNAALPILFAALLAEEPVEIQNVPKLKDIDTTMKLLTQLGTKVERNGSVWIDASNVNNFSAPYDLVKTMRASIWALGPLVARFGQGQVSLPGGCAIGARPVDLHIFGLEKLGAEIKLEEGYVKASVNGRLKGAHIVMDKVSVGATVTIMSAATLAEGTTIIENAAREPEIVDTANFLVALGAKISGQGTDRITIEGVERLGGGVYRVLPDRIETGTFLVAAAISGGKIVCRNAQPDTLDAVLAKLREAGADIETGEDWISLDMHGKRPKAVTVRTAPHPAFPTDMQAQFTLLNLVAEGTGVITETIFENRFMHVPELIRMGAHAEIESNTVICHGVEKLSGAQVMATDLRASASLVLAGCIAEGTTVVDRIYHIDRGYERIEDKLRALGANIERVKGE.

Residue 22–23 (KN) coordinates phosphoenolpyruvate. R91 is a UDP-N-acetyl-alpha-D-glucosamine binding site. Residue C115 is the Proton donor of the active site. C115 is modified (2-(S-cysteinyl)pyruvic acid O-phosphothioketal). UDP-N-acetyl-alpha-D-glucosamine-binding positions include 120–124 (RPVDL), 160–163 (KVSV), D305, and I327.

It belongs to the EPSP synthase family. MurA subfamily.

Its subcellular location is the cytoplasm. The catalysed reaction is phosphoenolpyruvate + UDP-N-acetyl-alpha-D-glucosamine = UDP-N-acetyl-3-O-(1-carboxyvinyl)-alpha-D-glucosamine + phosphate. It participates in cell wall biogenesis; peptidoglycan biosynthesis. With respect to regulation, in vitro inhibited by covalent binding of fosfomycin and the fungal product terreic acid in the presence of substrate UDP-N-acetylglucosamine, with an inactivation rate constant of 130 M(-1)sec(-1) for terreic acid. Cell wall formation. Adds enolpyruvyl to UDP-N-acetylglucosamine. Target for the antibiotic fosfomycin. This chain is UDP-N-acetylglucosamine 1-carboxyvinyltransferase, found in Enterobacter cloacae subsp. cloacae (strain ATCC 13047 / DSM 30054 / NBRC 13535 / NCTC 10005 / WDCM 00083 / NCDC 279-56).